Reading from the N-terminus, the 106-residue chain is Urease subunit beta (106 aa).

It belongs to the urease beta subunit family. In terms of assembly, heterotrimer of UreA (gamma), UreB (beta) and UreC (alpha) subunits. Three heterotrimers associate to form the active enzyme.

It localises to the cytoplasm. It catalyses the reaction urea + 2 H2O + H(+) = hydrogencarbonate + 2 NH4(+). The protein operates within nitrogen metabolism; urea degradation; CO(2) and NH(3) from urea (urease route): step 1/1. This is Urease subunit beta from Synechococcus sp. (strain CC9902).